A 606-amino-acid chain; its full sequence is Transcription factor glial cells missing 2 (606 aa).

The span at 20 to 37 (DHSQLTQFVQPQSQSTHS) shows a compositional bias: polar residues. Disordered regions lie at residues 20 to 65 (DHSQ…KGKR), 475 to 501 (EMQQ…HHYY), and 561 to 606 (TAPT…SVTH). Over residues 44-61 (PGQQQAGGSMTMPSSSTG) the composition is skewed to low complexity. A DNA-binding region (GCM) is located at residues 65–224 (REWDINDAIV…KNSSVSKRAF (160 aa)). Polar residues predominate over residues 490-501 (FGGNQTAGHHYY). The segment covering 569–580 (PGHPPPPPPPPT) has biased composition (pro residues). Positions 583-593 (YHHHHHHHLHH) are enriched in basic residues. Residues 594-606 (PAAATGLAPSVTH) are compositionally biased toward low complexity.

Expressed in glial lineages within embryonic procephalic mesoderm. Expression is highest in hemocyte primordia and longitudinal and nerve root ganglia.

The protein resides in the nucleus. In terms of biological role, transcription factor with a minor role promoting glial cell differentiation and a more significant role in hematocyte differentiation. Gcm2, together with gcm, is required for the proliferation of plasmatocyte precursors, the expression of Croquemort protein, and the ability of plasmatocytes to convert into macrophages. The sequence is that of Transcription factor glial cells missing 2 (gcm2) from Drosophila melanogaster (Fruit fly).